A 696-amino-acid chain; its full sequence is Polyribonucleotide nucleotidyltransferase (696 aa).

Residues D486 and D492 each contribute to the Mg(2+) site. Positions P553–V612 constitute a KH domain. Positions G622–K690 constitute an S1 motif domain.

This sequence belongs to the polyribonucleotide nucleotidyltransferase family. The cofactor is Mg(2+).

The protein localises to the cytoplasm. The catalysed reaction is RNA(n+1) + phosphate = RNA(n) + a ribonucleoside 5'-diphosphate. Its function is as follows. Involved in mRNA degradation. Catalyzes the phosphorolysis of single-stranded polyribonucleotides processively in the 3'- to 5'-direction. The chain is Polyribonucleotide nucleotidyltransferase from Leptospira borgpetersenii serovar Hardjo-bovis (strain JB197).